A 1047-amino-acid polypeptide reads, in one-letter code: Error-prone DNA polymerase (1047 aa).

Belongs to the DNA polymerase type-C family. DnaE2 subfamily.

It localises to the cytoplasm. The catalysed reaction is DNA(n) + a 2'-deoxyribonucleoside 5'-triphosphate = DNA(n+1) + diphosphate. DNA polymerase involved in damage-induced mutagenesis and translesion synthesis (TLS). It is not the major replicative DNA polymerase. In Methylococcus capsulatus (strain ATCC 33009 / NCIMB 11132 / Bath), this protein is Error-prone DNA polymerase.